The chain runs to 402 residues: 26S proteasome non-ATPase regulatory subunit 4 homolog (402 aa).

The VWFA domain maps to 5–189 (ATMICIDNSE…LSDVLISTPI (185 aa)). The region spanning 221–240 (NVDPELALALRLSMEEERAR) is the UIM 1 domain. Residues 241-261 (QEAIAKKAAEESSGAENKDHA) are compositionally biased toward basic and acidic residues. Disordered stretches follow at residues 241–292 (QEAI…EDDD) and 302–321 (MSME…MAEA). 2 consecutive UIM domains span residues 291–310 (DDAQ…GSSG) and 323–342 (VDDQ…AGGS). The interval 363-402 (SLPGVDPNDPSVKDLLASLHGQGEQEKKEDKSDKPEDEKK) is disordered. Over residues 385–402 (GEQEKKEDKSDKPEDEKK) the composition is skewed to basic and acidic residues.

This sequence belongs to the proteasome subunit S5A family. Component of the 19S regulatory particle (RP/PA700) base subcomplex of the 26S proteasome. The 26S proteasome is composed of a core protease (CP), known as the 20S proteasome, capped at one or both ends by the 19S regulatory particle (RP/PA700). The RP/PA700 complex is composed of at least 17 different subunits in two subcomplexes, the base and the lid, which form the portions proximal and distal to the 20S proteolytic core, respectively. Interacts with PI4KG4.

Its function is as follows. Plays a role in maintaining the structural integrity of the 19S regulatory particle (RP), subcomplex of the 26S proteasome. Plays a major role in both the direct and indirect recognition of ubiquitinated substrates of ubiquitin/26S proteasome-mediated proteolysis (UPP). Binds and presumably selects ubiquitin-conjugates for destruction. In Oryza sativa subsp. japonica (Rice), this protein is 26S proteasome non-ATPase regulatory subunit 4 homolog.